Here is a 272-residue protein sequence, read N- to C-terminus: Phosphatidylglycerol--prolipoprotein diacylglyceryl transferase (272 aa).

4 helical membrane-spanning segments follow: residues 24-44, 64-84, 99-119, and 125-145; these read WYAL…RHLV, LLVY…VVFY, LWQG…GVML, and GLPT…GLFL. A 1,2-diacyl-sn-glycero-3-phospho-(1'-sn-glycerol) is bound at residue R147. Transmembrane regions (helical) follow at residues 185-205, 209-229, and 245-265; these read AAAE…LGAL, GLVT…CEFF, and MGML…AFAY.

The protein belongs to the Lgt family.

It is found in the cell inner membrane. The catalysed reaction is L-cysteinyl-[prolipoprotein] + a 1,2-diacyl-sn-glycero-3-phospho-(1'-sn-glycerol) = an S-1,2-diacyl-sn-glyceryl-L-cysteinyl-[prolipoprotein] + sn-glycerol 1-phosphate + H(+). The protein operates within protein modification; lipoprotein biosynthesis (diacylglyceryl transfer). Its function is as follows. Catalyzes the transfer of the diacylglyceryl group from phosphatidylglycerol to the sulfhydryl group of the N-terminal cysteine of a prolipoprotein, the first step in the formation of mature lipoproteins. This Methylocella silvestris (strain DSM 15510 / CIP 108128 / LMG 27833 / NCIMB 13906 / BL2) protein is Phosphatidylglycerol--prolipoprotein diacylglyceryl transferase.